The primary structure comprises 1820 residues: Cation channel sperm-associated targeting subunit tau (1820 aa).

Positions 87 to 222 (DSEELEITQE…QKGCFIEEVQ (136 aa)) constitute a C2 domain. Disordered stretches follow at residues 360–383 (SEET…ELEN), 403–443 (LLDN…TEVH), 695–722 (EVSM…SSME), and 838–857 (SSTK…SGSS). Residues 415 to 443 (PTLNQSDQDNSTADASKNDESTPSPTEVH) show a composition bias toward polar residues.

In terms of assembly, component of the CatSper complex or CatSpermasome composed of the core pore-forming members CATSPER1, CATSPER2, CATSPER3 and CATSPER4 as well as auxiliary members CATSPERB, CATSPERG, CATSPERD, CATSPERE, CATSPERZ, C2CD6/CATSPERT, TMEM249, TMEM262 and EFCAB9. HSPA1 may be an additional auxiliary complex member. The core complex members CATSPER1, CATSPER2, CATSPER3 and CATSPER4 form a heterotetrameric channel. The auxiliary CATSPERB, CATSPERG, CATSPERD and CATSPERE subunits form a pavilion-like structure over the pore which stabilizes the complex through interactions with CATSPER4, CATSPER3, CATSPER1 and CATSPER2 respectively. SLCO6C1 interacts with CATSPERE and TMEM262/CATSPERH interacts with CATSPERB, further stabilizing the complex. C2CD6/CATSPERT interacts at least with CATSPERD and is required for targeting the CatSper complex in the flagellar membrane. In terms of tissue distribution, expressed in testis (at protein level).

The protein localises to the cell projection. It localises to the cilium. It is found in the flagellum membrane. Functionally, auxiliary component of the CatSper complex, a complex involved in sperm cell hyperactivation. Sperm cell hyperactivation is needed for sperm motility which is essential late in the preparation of sperm for fertilization. Required for CatSper complex targeting and trafficking into the quadrilinear nanodomains. Targets the preassembled CatSper complexes to elongating flagella, where it links the channel-carrying vesicles and motor proteins. This is Cation channel sperm-associated targeting subunit tau from Homo sapiens (Human).